Consider the following 254-residue polypeptide: Anti-sigma-M factor RsmA (254 aa).

At 1–112 (MSAADKDPDK…AARPHVHPVR (112 aa)) the chain is on the cytoplasmic side. A helical membrane pass occupies residues 113–133 (MIAGAAGLCAVATAIGVGAVV). Residues 134–254 (DAPPPAPSAP…LLASTVVPRA (121 aa)) lie on the Extracellular side of the membrane.

In terms of assembly, interacts with ECF RNA polymerase sigma factor SigM; this should inhibit the interaction of SigM with the RNA polymerase catalytic core. Probably cleaved within the membrane by Rip1 near the cytoplasmic membrane interface.

The protein localises to the cell membrane. In terms of biological role, an anti-sigma factor for extracytoplasmic function (ECF) sigma factor SigM. ECF sigma factors are held in an inactive form by an anti-sigma factor until released by regulated intramembrane proteolysis (RIP). RIP occurs when an extracytoplasmic signal triggers a concerted proteolytic cascade to transmit information and elicit cellular responses. The membrane-spanning regulatory substrate protein is first cut extracytoplasmically (site-1 protease, S1P), then within the membrane itself (site-2 protease, S2P, Rip1), while cytoplasmic proteases finish degrading the regulatory protein, liberating the sigma factor. The sequence is that of Anti-sigma-M factor RsmA (rsmA) from Mycobacterium tuberculosis (strain ATCC 35801 / TMC 107 / Erdman).